Here is a 496-residue protein sequence, read N- to C-terminus: Probable CtpA-like serine protease (496 aa).

The segment at 1–26 (MRKCFFMSHNPEEKQSNLDSNHKNES) is disordered. The segment covering 10-25 (NPEEKQSNLDSNHKNE) has biased composition (basic and acidic residues). A helical transmembrane segment spans residues 39-59 (FILLLLGVVIITAGITVAATI). One can recognise a PDZ domain in the interval 124-206 (TKSFNEDVSG…TTVKLTIKRG (83 aa)). Residues serine 329, aspartate 340, and lysine 354 each act as charge relay system in the active site.

Belongs to the peptidase S41A family.

The protein localises to the cell membrane. This chain is Probable CtpA-like serine protease, found in Staphylococcus haemolyticus (strain JCSC1435).